Consider the following 245-residue polypeptide: Ribosomal RNA large subunit methyltransferase E (245 aa).

The S-adenosyl-L-methionine site is built by Gly58, Trp60, Asp78, Asp96, and Asp123. Lys163 serves as the catalytic Proton acceptor.

It belongs to the class I-like SAM-binding methyltransferase superfamily. RNA methyltransferase RlmE family.

It localises to the cytoplasm. The catalysed reaction is uridine(2552) in 23S rRNA + S-adenosyl-L-methionine = 2'-O-methyluridine(2552) in 23S rRNA + S-adenosyl-L-homocysteine + H(+). Its function is as follows. Specifically methylates the uridine in position 2552 of 23S rRNA at the 2'-O position of the ribose in the fully assembled 50S ribosomal subunit. This chain is Ribosomal RNA large subunit methyltransferase E, found in Methanocaldococcus jannaschii (strain ATCC 43067 / DSM 2661 / JAL-1 / JCM 10045 / NBRC 100440) (Methanococcus jannaschii).